Consider the following 290-residue polypeptide: Ribosomal RNA small subunit methyltransferase A (290 aa).

Positions 28, 30, 55, 76, 102, and 126 each coordinate S-adenosyl-L-methionine.

The protein belongs to the class I-like SAM-binding methyltransferase superfamily. rRNA adenine N(6)-methyltransferase family. RsmA subfamily.

Its subcellular location is the cytoplasm. The enzyme catalyses adenosine(1518)/adenosine(1519) in 16S rRNA + 4 S-adenosyl-L-methionine = N(6)-dimethyladenosine(1518)/N(6)-dimethyladenosine(1519) in 16S rRNA + 4 S-adenosyl-L-homocysteine + 4 H(+). In terms of biological role, specifically dimethylates two adjacent adenosines (A1518 and A1519) in the loop of a conserved hairpin near the 3'-end of 16S rRNA in the 30S particle. May play a critical role in biogenesis of 30S subunits. This chain is Ribosomal RNA small subunit methyltransferase A, found in Lachnoclostridium phytofermentans (strain ATCC 700394 / DSM 18823 / ISDg) (Clostridium phytofermentans).